A 515-amino-acid polypeptide reads, in one-letter code: Tripartite motif-containing protein 5 (515 aa).

A2 carries the post-translational modification N-acetylalanine. The RING-type zinc finger occupies 15 to 60 (CPICLELLTEPLSLPCGHSFCQACITANHKESMLYKEEERSCPVCR). S87 is modified (phosphoserine). The B box-type zinc finger occupies 92–133 (QKVDHCARHGEKLLLFCQEDSKVICWLCERSQEHRGHHTFLM). C97, H100, C119, and H125 together coordinate Zn(2+). A coiled-coil region spans residues 137–225 (AQEYHVKLQT…LTKSETEMVQ (89 aa)). The required for interaction with GABARAP and for autophagy stretch occupies residues 187-200 (FEQLREILDWEESN). Positions 283–515 (LKGMLDMFRE…VPMTLCSPSS (233 aa)) constitute a B30.2/SPRY domain.

It belongs to the TRIM/RBCC family. In terms of assembly, can form homodimers and homotrimers. In addition to lower-order dimerization, also exhibits a higher-order multimerization and both low- and high-order multimerizations are essential for its restriction activity. Interacts with BTBD1 and BTBD2. Interacts with PSMC4, PSMC5, PSMD7 and HSPA8/HSC70. Interacts (via B30.2/SPRY domain) with HSPA1A/B. Interacts with PSMC2, MAP3K7/TAK1, TAB2 and TAB3. Interacts with SQSTM1. Interacts with TRIM6 and TRIM34. Interacts with ULK1 (phosphorylated form), GABARAP, GABARAPL1, GABARAPL2, MAP1LC3A, MAP1LC3C and BECN1. Degraded in a proteasome-independent fashion in the absence of viral infection but in a proteasome-dependent fashion following exposure to restriction sensitive virus. In terms of processing, autoubiquitinated in a RING finger- and UBE2D2-dependent manner. Monoubiquitinated by TRIM21. Deubiquitinated by Yersinia YopJ. Ubiquitination may not lead to proteasomal degradation.

The protein localises to the cytoplasm. Its subcellular location is the nucleus. It carries out the reaction S-ubiquitinyl-[E2 ubiquitin-conjugating enzyme]-L-cysteine + [acceptor protein]-L-lysine = [E2 ubiquitin-conjugating enzyme]-L-cysteine + N(6)-ubiquitinyl-[acceptor protein]-L-lysine.. The protein operates within protein modification; protein ubiquitination. Capsid-specific restriction factor that prevents infection from non-host-adapted retroviruses. Blocks viral replication early in the life cycle, after viral entry but before reverse transcription. In addition to acting as a capsid-specific restriction factor, also acts as a pattern recognition receptor that activates innate immune signaling in response to the retroviral capsid lattice. Binding to the viral capsid triggers its E3 ubiquitin ligase activity, and in concert with the heterodimeric ubiquitin conjugating enzyme complex UBE2V1-UBE2N (also known as UBC13-UEV1A complex) generates 'Lys-63'-linked polyubiquitin chains, which in turn are catalysts in the autophosphorylation of the MAP3K7/TAK1 complex (includes TAK1, TAB2, and TAB3). Activation of the MAP3K7/TAK1 complex by autophosphorylation results in the induction and expression of NF-kappa-B and MAPK-responsive inflammatory genes, thereby leading to an innate immune response in the infected cell. Restricts infection by human immunodeficiency virus type 1 (HIV-1), simian immunodeficiency virus (SIV-mac) and N-tropic murine leukemia viruse (N-MLV). Plays a role in regulating autophagy through activation of autophagy regulator BECN1 by causing its dissociation from its inhibitors BCL2 and TAB2. This chain is Tripartite motif-containing protein 5 (TRIM5), found in Chlorocebus tantalus (Tantalus monkey).